The chain runs to 191 residues: Chorion class B protein Ld10 (191 aa).

The signal sequence occupies residues 1–21; that stretch reads MSAKIILVFCAQALFVQSALS.

Belongs to the chorion protein family.

Functionally, this protein is one of many from the eggshell of the gypsy moth. The protein is Chorion class B protein Ld10 of Lymantria dispar (Gypsy moth).